The following is a 203-amino-acid chain: Proteasome subunit beta 2 (203 aa).

Positions 1 to 9 (MGEEVQIGA) are cleaved as a propeptide — removed in mature form; by autocatalysis. The Nucleophile role is filled by threonine 10.

This sequence belongs to the peptidase T1B family. As to quaternary structure, the 20S proteasome core is composed of 14 alpha and 14 beta subunits that assemble into four stacked heptameric rings, resulting in a barrel-shaped structure. The two inner rings, each composed of seven catalytic beta subunits, are sandwiched by two outer rings, each composed of seven alpha subunits. The catalytic chamber with the active sites is on the inside of the barrel. Has a gated structure, the ends of the cylinder being occluded by the N-termini of the alpha-subunits. Is capped at one or both ends by the proteasome regulatory ATPase, PAN.

The protein localises to the cytoplasm. It carries out the reaction Cleavage of peptide bonds with very broad specificity.. With respect to regulation, the formation of the proteasomal ATPase PAN-20S proteasome complex, via the docking of the C-termini of PAN into the intersubunit pockets in the alpha-rings, triggers opening of the gate for substrate entry. Interconversion between the open-gate and close-gate conformations leads to a dynamic regulation of the 20S proteasome proteolysis activity. Functionally, component of the proteasome core, a large protease complex with broad specificity involved in protein degradation. The polypeptide is Proteasome subunit beta 2 (Pyrobaculum aerophilum (strain ATCC 51768 / DSM 7523 / JCM 9630 / CIP 104966 / NBRC 100827 / IM2)).